Here is a 137-residue protein sequence, read N- to C-terminus: Small ribosomal subunit protein uS12 (137 aa).

D89 bears the 3-methylthioaspartic acid mark. The segment at 104–137 is disordered; the sequence is TAGVNGRKQSRSKYGAKRPKPGQAAAAPAKGKKK. Residues 111–123 show a composition bias toward basic residues; sequence KQSRSKYGAKRPK. Over residues 124 to 137 the composition is skewed to low complexity; sequence PGQAAAAPAKGKKK.

Belongs to the universal ribosomal protein uS12 family. Part of the 30S ribosomal subunit. Contacts proteins S8 and S17. May interact with IF1 in the 30S initiation complex.

With S4 and S5 plays an important role in translational accuracy. In terms of biological role, interacts with and stabilizes bases of the 16S rRNA that are involved in tRNA selection in the A site and with the mRNA backbone. Located at the interface of the 30S and 50S subunits, it traverses the body of the 30S subunit contacting proteins on the other side and probably holding the rRNA structure together. The combined cluster of proteins S8, S12 and S17 appears to hold together the shoulder and platform of the 30S subunit. This chain is Small ribosomal subunit protein uS12, found in Cytophaga hutchinsonii (strain ATCC 33406 / DSM 1761 / CIP 103989 / NBRC 15051 / NCIMB 9469 / D465).